Here is a 503-residue protein sequence, read N- to C-terminus: Probable cytosol aminopeptidase (503 aa).

The Mn(2+) site is built by Lys-272 and Asp-277. Lys-284 is a catalytic residue. Mn(2+) is bound by residues Asp-295, Asp-354, and Glu-356. Arg-358 is a catalytic residue.

Belongs to the peptidase M17 family. Mn(2+) serves as cofactor.

It is found in the cytoplasm. It catalyses the reaction Release of an N-terminal amino acid, Xaa-|-Yaa-, in which Xaa is preferably Leu, but may be other amino acids including Pro although not Arg or Lys, and Yaa may be Pro. Amino acid amides and methyl esters are also readily hydrolyzed, but rates on arylamides are exceedingly low.. It carries out the reaction Release of an N-terminal amino acid, preferentially leucine, but not glutamic or aspartic acids.. In terms of biological role, presumably involved in the processing and regular turnover of intracellular proteins. Catalyzes the removal of unsubstituted N-terminal amino acids from various peptides. This Chlorobium limicola (strain DSM 245 / NBRC 103803 / 6330) protein is Probable cytosol aminopeptidase.